The sequence spans 217 residues: MICKDDHSTLRARFRGFYPVVVDVETAGLDANINALLEIAVATFKMDEYGWLCVDGSLNFHIKSFPGAIIQPESLAFNGIDLNSPLRAAVTEQEALHEIFEMVRQGIKTQGCSRAIIVAHNAFFDHSFLMAAVERVSFMEKNPFHPFVMFDTATLSGLVFGQTVLAKACACAGVFFDKNKAHSALYDTERTAMLFCELVNKWKRLGGWPLTPCCIES.

An Exonuclease domain is found at 20–195 (VVVDVETAGL…YDTERTAMLF (176 aa)). 4 residues coordinate Mg(2+): D23, E25, H182, and D187. H182 (proton donor/acceptor) is an active-site residue.

The protein belongs to the RNase T family. In terms of assembly, homodimer. Mg(2+) serves as cofactor.

Trims short 3' overhangs of a variety of RNA species, leaving a one or two nucleotide 3' overhang. Responsible for the end-turnover of tRNA: specifically removes the terminal AMP residue from uncharged tRNA (tRNA-C-C-A). Also appears to be involved in tRNA biosynthesis. This is Ribonuclease T from Blochmanniella pennsylvanica (strain BPEN).